The sequence spans 328 residues: Phosphatidylglycerol--prolipoprotein diacylglyceryl transferase (328 aa).

3 helical membrane passes run 15 to 35, 57 to 77, and 106 to 126; these read VIQG…ILIS, IFMF…STLV, and GMAI…TINT. Position 156 (arginine 156) interacts with a 1,2-diacyl-sn-glycero-3-phospho-(1'-sn-glycerol). 2 helical membrane passes run 242–262 and 289–309; these read GFIF…IEYL and ISMG…WIIV.

Belongs to the Lgt family.

It is found in the cell inner membrane. It catalyses the reaction L-cysteinyl-[prolipoprotein] + a 1,2-diacyl-sn-glycero-3-phospho-(1'-sn-glycerol) = an S-1,2-diacyl-sn-glyceryl-L-cysteinyl-[prolipoprotein] + sn-glycerol 1-phosphate + H(+). It functions in the pathway protein modification; lipoprotein biosynthesis (diacylglyceryl transfer). Its function is as follows. Catalyzes the transfer of the diacylglyceryl group from phosphatidylglycerol to the sulfhydryl group of the N-terminal cysteine of a prolipoprotein, the first step in the formation of mature lipoproteins. The sequence is that of Phosphatidylglycerol--prolipoprotein diacylglyceryl transferase from Borreliella burgdorferi (strain ZS7) (Borrelia burgdorferi).